A 412-amino-acid chain; its full sequence is NADH-quinone oxidoreductase subunit 4 (412 aa).

It belongs to the complex I 49 kDa subunit family. NDH-1 is composed of at least 14 different subunits, Nqo1 to Nqo14. The complex has a L-shaped structure, with the hydrophobic arm (subunits Nqo7, Nqo8, Nqo10 to Nqo14) embedded in the inner membrane and the hydrophilic peripheral arm (subunits Nqo1 to Nqo6, Nqo9) protruding into the bacterial cytoplasm. The hydrophilic domain contains all the redox centers.

The protein resides in the cell inner membrane. It catalyses the reaction a quinone + NADH + 5 H(+)(in) = a quinol + NAD(+) + 4 H(+)(out). NDH-1 shuttles electrons from NADH, via FMN and iron-sulfur (Fe-S) centers, to quinones in the respiratory chain. The immediate electron acceptor for the enzyme in this species is believed to be ubiquinone. Couples the redox reaction to proton translocation (for every two electrons transferred, four hydrogen ions are translocated across the cytoplasmic membrane), and thus conserves the redox energy in a proton gradient. The protein is NADH-quinone oxidoreductase subunit 4 (nqo4) of Paracoccus denitrificans.